The following is a 352-amino-acid chain: Speedy protein E16 (352 aa).

Residues 1–90 (MDRTETRFRK…EPEKELAPEP (90 aa)) are disordered. A compositionally biased stretch (polar residues) spans 18–40 (ITTSRQPHPQNEQSPQRSTSGYS). Acidic residues predominate over residues 76-90 (DESEEEPEKELAPEP).

This sequence belongs to the Speedy/Ringo family.

This is Speedy protein E16 from Homo sapiens (Human).